An 876-amino-acid chain; its full sequence is DNA polymerase 1 (876 aa).

Belongs to the DNA polymerase type-B family.

It catalyses the reaction DNA(n) + a 2'-deoxyribonucleoside 5'-triphosphate = DNA(n+1) + diphosphate. In terms of biological role, this polymerase possesses two enzymatic activities: DNA synthesis (polymerase) and an exonucleolytic activity that degrades single-stranded DNA in the 3'- to 5'-direction. The polypeptide is DNA polymerase 1 (dpo1) (Sulfolobus acidocaldarius (strain ATCC 33909 / DSM 639 / JCM 8929 / NBRC 15157 / NCIMB 11770)).